A 267-amino-acid polypeptide reads, in one-letter code: Cytochrome b (267 aa).

4 consecutive transmembrane segments (helical) span residues 33 to 53 (FGSL…FLAM), 77 to 98 (WLIR…FIHV), 113 to 133 (WNIG…GYVL), and 178 to 198 (FFAF…VHLL). Heme b contacts are provided by histidine 83 and histidine 97. Heme b is bound by residues histidine 182 and histidine 196. Histidine 201 is a binding site for a ubiquinone. Residues 226-246 (IKDLLGVILLLMVLMILVLFF) form a helical membrane-spanning segment.

It belongs to the cytochrome b family. In terms of assembly, the cytochrome bc1 complex contains 11 subunits: 3 respiratory subunits (MT-CYB, CYC1 and UQCRFS1), 2 core proteins (UQCRC1 and UQCRC2) and 6 low-molecular weight proteins (UQCRH/QCR6, UQCRB/QCR7, UQCRQ/QCR8, UQCR10/QCR9, UQCR11/QCR10 and a cleavage product of UQCRFS1). This cytochrome bc1 complex then forms a dimer. The cofactor is heme b.

Its subcellular location is the mitochondrion inner membrane. In terms of biological role, component of the ubiquinol-cytochrome c reductase complex (complex III or cytochrome b-c1 complex) that is part of the mitochondrial respiratory chain. The b-c1 complex mediates electron transfer from ubiquinol to cytochrome c. Contributes to the generation of a proton gradient across the mitochondrial membrane that is then used for ATP synthesis. The protein is Cytochrome b (MT-CYB) of Abrothrix olivaceus (Olive grass mouse).